The chain runs to 568 residues: COMPASS component cclA (568 aa).

The disordered stretch occupies residues 1–113 (MASDSGTPPP…MRYKLAPPKP (113 aa)). Basic and acidic residues-rich tracts occupy residues 68 to 77 (KESLKKRESK) and 89 to 98 (PDPKHREPKQ). The 194-residue stretch at 160 to 353 (ADPGFPSSLY…IPIRFKQHIY (194 aa)) folds into the B30.2/SPRY domain.

Belongs to the cclA family. Component of the COMPASS complex.

It is found in the nucleus. The protein localises to the chromosome. Its subcellular location is the telomere. In terms of biological role, component of the COMPASS (Set1C) complex that specifically mono-, di- and trimethylates histone H3 to form H3K4me1/2/3, which subsequently plays a role in telomere length maintenance and transcription elongation regulation. Controls the production of several secondary metabolites, including colletochlorins, higginsianins and sclerosporide. Plays a key role in mycelial growth, sporulation, spore germination and virulence. The chain is COMPASS component cclA from Colletotrichum higginsianum (strain IMI 349063) (Crucifer anthracnose fungus).